The primary structure comprises 215 residues: Protein-L-isoaspartate O-methyltransferase 1 (215 aa).

Ser61 is a catalytic residue.

It belongs to the methyltransferase superfamily. L-isoaspartyl/D-aspartyl protein methyltransferase family.

Its subcellular location is the cytoplasm. The enzyme catalyses [protein]-L-isoaspartate + S-adenosyl-L-methionine = [protein]-L-isoaspartate alpha-methyl ester + S-adenosyl-L-homocysteine. Catalyzes the methyl esterification of L-isoaspartyl residues in peptides and proteins that result from spontaneous decomposition of normal L-aspartyl and L-asparaginyl residues. It plays a role in the repair and/or degradation of damaged proteins. The polypeptide is Protein-L-isoaspartate O-methyltransferase 1 (Pelobacter propionicus (strain DSM 2379 / NBRC 103807 / OttBd1)).